The chain runs to 649 residues: Glucan endo-1,3-beta-glucosidase btgC (649 aa).

Disordered regions lie at residues 1–50 and 110–224; these read MGDR…AHTH and YHTT…AGGA. The Cytoplasmic segment spans residues 1-274; that stretch reads MGDRSEQYGD…PRPSGASRKR (274 aa). The span at 144–157 shows a compositional bias: low complexity; that stretch reads GSSAALSAAGAPAG. Acidic residues predominate over residues 198–208; it reads NPDDILDDGDD. The helical; Signal-anchor for type II membrane protein transmembrane segment at 275-295 threads the bilayer; that stretch reads GWIIGGILAFIVIGAIVGGAV. The Extracellular segment spans residues 296 to 649; it reads GGTLGNRRSE…IPDCGGKTAA (354 aa). A disordered region spans residues 301 to 329; the sequence is NRRSETASESSEVSADDDTETNGDLDKNS. Positions 314–323 are enriched in acidic residues; the sequence is SADDDTETNG. N-linked (GlcNAc...) asparagine glycans are attached at residues N369, N392, and N420. Catalysis depends on E452, which acts as the Proton donor. E551 (nucleophile) is an active-site residue. An N-linked (GlcNAc...) asparagine glycan is attached at N596.

The protein belongs to the glycosyl hydrolase 17 family.

It localises to the cell membrane. It catalyses the reaction Hydrolysis of (1-&gt;3)-beta-D-glucosidic linkages in (1-&gt;3)-beta-D-glucans.. Its function is as follows. Glucanases play a role in cell expansion during growth, in cell-cell fusion during mating, and in spore release during sporulation. This enzyme may be involved in beta-glucan degradation. Active on laminarin and lichenan. In Emericella nidulans (strain FGSC A4 / ATCC 38163 / CBS 112.46 / NRRL 194 / M139) (Aspergillus nidulans), this protein is Glucan endo-1,3-beta-glucosidase btgC (btgC).